The chain runs to 420 residues: Aminoacyltransferase FemA (420 aa).

It belongs to the FemABX family. As to quaternary structure, homodimer. Interacts with FemB.

Its subcellular location is the cytoplasm. The catalysed reaction is beta-D-GlcNAc-(1-&gt;4)-Mur2Ac(oyl-L-Ala-D-isoglutaminyl-L-Lys-(N(6)-Gly)-D-Ala-D-Ala)-di-trans,octa-cis-undecaprenyl diphosphate + 2 glycyl-tRNA(Gly) = MurNAc-L-Ala-D-isoglutaminyl-L-Lys-(N(6)-tri-Gly)-D-Ala-D-Ala-diphospho-di-trans,octa-cis-undecaprenyl-GlcNAc + 2 tRNA(Gly) + 2 H(+). Catalyzes the formation of the pentaglycine interpeptide bridge, which is characteristic of the S.aureus peptidoglycan. Adds glycines 2 and 3 of the pentaglycine bridge, using glycyl-tRNA(Gly) as donor. Involved in resistance to methicillin. This is Aminoacyltransferase FemA (femA) from Staphylococcus aureus (strain NCTC 8325 / PS 47).